The primary structure comprises 449 residues: Glutamate--tRNA ligase 1 (449 aa).

The short motif at 11–21 (PSPTGSLHVGN) is the 'HIGH' region element. The short motif at 242 to 246 (PLSKR) is the 'KMSKS' region element. Lys-245 is an ATP binding site.

This sequence belongs to the class-I aminoacyl-tRNA synthetase family. Glutamate--tRNA ligase type 1 subfamily. In terms of assembly, monomer.

The protein resides in the cytoplasm. It carries out the reaction tRNA(Glu) + L-glutamate + ATP = L-glutamyl-tRNA(Glu) + AMP + diphosphate. Catalyzes the attachment of glutamate to tRNA(Glu) in a two-step reaction: glutamate is first activated by ATP to form Glu-AMP and then transferred to the acceptor end of tRNA(Glu). The chain is Glutamate--tRNA ligase 1 from Parvibaculum lavamentivorans (strain DS-1 / DSM 13023 / NCIMB 13966).